A 300-amino-acid chain; its full sequence is Transcription initiation factor IIB (300 aa).

The segment at 3–34 (KQRVCPVCGSTEFIYDPERGEIVCARCGYVIE) adopts a TFIIB-type zinc-finger fold. Residues cysteine 7, cysteine 10, cysteine 26, and cysteine 29 each coordinate Zn(2+). 2 consecutive repeat copies span residues 114-197 (SELD…ARNL) and 210-291 (DYVN…ELVE).

The protein belongs to the TFIIB family.

Stabilizes TBP binding to an archaeal box-A promoter. Also responsible for recruiting RNA polymerase II to the pre-initiation complex (DNA-TBP-TFIIB). This chain is Transcription initiation factor IIB, found in Pyrococcus abyssi (strain GE5 / Orsay).